We begin with the raw amino-acid sequence, 622 residues long: Auxin response factor 11 (622 aa).

The TF-B3 DNA-binding region spans 145–247; it reads FVKILTASDT…DLRVGVRRLA (103 aa). Disordered regions lie at residues 358-398 and 483-513; these read SIQR…ISEI and SNISDSTTKCQDPNSSNSPKEQKQQTSTRSR. 2 stretches are compositionally biased toward polar residues: residues 376-387 and 483-511; these read SALTPTPTQQQS and SNISDSTTKCQDPNSSNSPKEQKQQTSTR. One can recognise a PB1 domain in the interval 511–594; that stretch reads RSRIKVQMQG…KKLFIYPSDE (84 aa).

The protein belongs to the ARF family. As to quaternary structure, homodimers and heterodimers.

The protein localises to the nucleus. Its function is as follows. Auxin response factors (ARFs) are transcriptional factors that bind specifically to the DNA sequence 5'-TGTCTC-3' found in the auxin-responsive promoter elements (AuxREs). Could act as transcriptional activator or repressor. Formation of heterodimers with Aux/IAA proteins may alter their ability to modulate early auxin response genes expression. This chain is Auxin response factor 11 (ARF11), found in Arabidopsis thaliana (Mouse-ear cress).